A 193-amino-acid chain; its full sequence is Interferon type A3 (193 aa).

An N-terminal signal peptide occupies residues 1-31 (MAVPASPQHPRGYGILLLTLLLKALATTASA). Intrachain disulfides connect C32/C129, C61/C155, and C68/C168. N-linked (GlcNAc...) asparagine glycosylation is found at N65, N71, N108, and N186.

The protein belongs to the alpha/beta interferon family.

The protein resides in the secreted. In terms of biological role, has antiviral activities. This Gallus gallus (Chicken) protein is Interferon type A3 (IFNA3).